Here is a 348-residue protein sequence, read N- to C-terminus: Dihydroorotase (348 aa).

Zn(2+) contacts are provided by His17 and His19. Substrate contacts are provided by residues 19-21 (HLR) and Asn45. Zn(2+) is bound by residues Lys103, His140, and His178. Lys103 carries the post-translational modification N6-carboxylysine. His140 contacts substrate. Leu223 contributes to the substrate binding site. Asp251 is a binding site for Zn(2+). Asp251 is an active-site residue. Residues His255 and Ala267 each coordinate substrate.

Belongs to the metallo-dependent hydrolases superfamily. DHOase family. Class II DHOase subfamily. Homodimer. Zn(2+) serves as cofactor.

It catalyses the reaction (S)-dihydroorotate + H2O = N-carbamoyl-L-aspartate + H(+). It participates in pyrimidine metabolism; UMP biosynthesis via de novo pathway; (S)-dihydroorotate from bicarbonate: step 3/3. Catalyzes the reversible cyclization of carbamoyl aspartate to dihydroorotate. The sequence is that of Dihydroorotase from Shigella sonnei (strain Ss046).